Consider the following 156-residue polypeptide: Ribosomal RNA large subunit methyltransferase H (156 aa).

Residues Leu-73, Gly-104, and 123-128 contribute to the S-adenosyl-L-methionine site; that span reads LSKLTL.

Belongs to the RNA methyltransferase RlmH family. In terms of assembly, homodimer.

It is found in the cytoplasm. The catalysed reaction is pseudouridine(1915) in 23S rRNA + S-adenosyl-L-methionine = N(3)-methylpseudouridine(1915) in 23S rRNA + S-adenosyl-L-homocysteine + H(+). Specifically methylates the pseudouridine at position 1915 (m3Psi1915) in 23S rRNA. This chain is Ribosomal RNA large subunit methyltransferase H, found in Idiomarina loihiensis (strain ATCC BAA-735 / DSM 15497 / L2-TR).